The following is a 289-amino-acid chain: Nodulation protein NolT (289 aa).

An N-terminal signal peptide occupies residues 1 to 33; that stretch reads MFGSAHGDTTSSDTSGRRPLRLVVLPLLLALSS. Cys-34 is lipidated: N-palmitoyl cysteine. Cys-34 carries the S-diacylglycerol cysteine lipid modification. The helical transmembrane segment at 233–253 threads the bilayer; sequence VAVGVSAAVFAVTCYLLFIVL.

The protein belongs to the YscJ lipoprotein family.

It is found in the cell outer membrane. In Sinorhizobium fredii (strain NBRC 101917 / NGR234), this protein is Nodulation protein NolT (nolT).